A 1090-amino-acid polypeptide reads, in one-letter code: RNA-directed RNA polymerase (1090 aa).

One can recognise a RdRp catalytic domain in the interval 506–678 (LSYGDVTRYL…ALASLTGCEI (173 aa)).

It belongs to the reoviridae RNA-directed RNA polymerase family. In terms of assembly, interacts with VP3 (Potential). Interacts with VP2; this interaction activates VP1. Interacts with NSP5; this interaction is probably necessary for the formation of functional virus factories. Interacts with NSP2; this interaction is weak. It depends on Mg(2+) as a cofactor.

It is found in the virion. It carries out the reaction RNA(n) + a ribonucleoside 5'-triphosphate = RNA(n+1) + diphosphate. RNA-directed RNA polymerase that is involved in both transcription and genome replication. Together with VP3 capping enzyme, forms an enzyme complex positioned near the channels situated at each of the five-fold vertices of the core. Following infection, the outermost layer of the virus is lost, leaving a double-layered particle (DLP) made up of the core and VP6 shell. VP1 then catalyzes the transcription of fully conservative plus-strand genomic RNAs that are extruded through the DLP's channels into the cytoplasm where they function as mRNAs for translation of viral proteins. One copy of each of the viral (+)RNAs is also recruited during core assembly, together with newly synthesized polymerase complexes and VP2. The polymerase of these novo-formed particles catalyzes the synthesis of complementary minus-strands leading to dsDNA formation. To do so, the polymerase specifically recognizes conserved 3' sequence(s) in plus-strand RNA templates. Once dsRNA synthesis is complete, the polymerase switches to the transcriptional mode, thus providing secondary transcription. The chain is RNA-directed RNA polymerase from Rotavirus C (isolate RVC/Human/United Kingdom/Bristol/1989) (RV-C).